We begin with the raw amino-acid sequence, 341 residues long: Methionine import ATP-binding protein MetN 2 (341 aa).

The 240-residue stretch at 2 to 241 (IELKEVVKEY…PQHTVTKRFV (240 aa)) folds into the ABC transporter domain. 38–45 (GFSGAGKS) contributes to the ATP binding site.

Belongs to the ABC transporter superfamily. Methionine importer (TC 3.A.1.24) family. The complex is composed of two ATP-binding proteins (MetN), two transmembrane proteins (MetI) and a solute-binding protein (MetQ).

The protein resides in the cell membrane. The enzyme catalyses L-methionine(out) + ATP + H2O = L-methionine(in) + ADP + phosphate + H(+). The catalysed reaction is D-methionine(out) + ATP + H2O = D-methionine(in) + ADP + phosphate + H(+). Its function is as follows. Part of the ABC transporter complex MetNIQ involved in methionine import. Responsible for energy coupling to the transport system. This is Methionine import ATP-binding protein MetN 2 from Staphylococcus aureus (strain bovine RF122 / ET3-1).